A 294-amino-acid polypeptide reads, in one-letter code: Golgi to ER traffic protein 2 (294 aa).

Positions 1-104 are disordered; the sequence is MSSELSETEK…QATSPQETID (104 aa). The Cytoplasmic segment spans residues 1-166; the sequence is MSSELSETEK…LDYNNYLINN (166 aa). Positions 12-21 are enriched in basic residues; that stretch reads KLIRERRQKK. A compositionally biased stretch (polar residues) spans 34 to 65; it reads ITGQAENSQLDTESPLDSKSSRETTPTVTKVD. Residues 85–95 are compositionally biased toward basic and acidic residues; it reads KVEKSQKKKEQ. A helical membrane pass occupies residues 167–187; sequence LKVWSIIFKWCFFLIPYLFAL. At 188–205 the chain is on the lumenal side; that stretch reads TRSEPISFLPEQFSNPSN. The helical transmembrane segment at 206–225 threads the bilayer; sequence FFMIFLSFEIVATSIYFQKL. The Cytoplasmic portion of the chain corresponds to 226 to 272; that stretch reads QNIEKSNKINGFQSNNKIVNLVSLIPEGVLPVPDIKGKVIMALQYWD. The helical transmembrane segment at 273–293 threads the bilayer; it reads VFSMFLTDICFVLVMMGLFKL. Position 294 (Ile-294) is a topological domain, lumenal.

This sequence belongs to the GET2 family. As to quaternary structure, component of the Golgi to ER traffic (GET) complex, which is composed of GET1, GET2 and GET3. Within the complex, GET1 and GET2 form a heterotetramer which is stabilized by phosphatidylinositol binding and which binds to the GET3 homodimer.

Its subcellular location is the endoplasmic reticulum membrane. The protein localises to the golgi apparatus membrane. Functionally, required for the post-translational delivery of tail-anchored (TA) proteins to the endoplasmic reticulum. Together with GET1, acts as a membrane receptor for soluble GET3, which recognizes and selectively binds the transmembrane domain of TA proteins in the cytosol. The GET complex cooperates with the HDEL receptor ERD2 to mediate the ATP-dependent retrieval of resident ER proteins that contain a C-terminal H-D-E-L retention signal from the Golgi to the ER. This Vanderwaltozyma polyspora (strain ATCC 22028 / DSM 70294 / BCRC 21397 / CBS 2163 / NBRC 10782 / NRRL Y-8283 / UCD 57-17) (Kluyveromyces polysporus) protein is Golgi to ER traffic protein 2.